Consider the following 754-residue polypeptide: 17S U2 SnRNP complex component HTATSF1 (754 aa).

Disordered regions lie at residues 1-53 (MSGT…YEWD) and 81-122 (GASS…KAES). S2 bears the N-acetylserine mark. Residues 90 to 122 (EDVHARTAEEPPQEKAPEPTDPRKKGEKRKAES) are compositionally biased toward basic and acidic residues. RRM domains follow at residues 133–218 (TNVY…VAKF) and 264–349 (RVVI…AWDG). A U2AF homology motif (UHM) region spans residues 259–353 (RMRHERVVII…AQAWDGTTDY (95 aa)). K297 is modified (N6-acetyllysine). The disordered stretch occupies residues 380–415 (RGLRRSDSVSASERAGPSRARHFSEHPSTSKMNAQE). Residues 381–754 (GLRRSDSVSA…ILSSDDDDDI (374 aa)) form a mediates interaction with the P-TEFb complex region. A phosphoserine mark is found at S387, S403, S407, and S409. Residues 405–415 (HPSTSKMNAQE) show a composition bias toward polar residues. Glycyl lysine isopeptide (Lys-Gly) (interchain with G-Cter in SUMO2) cross-links involve residues K429 and K430. Positions 433-754 (KTEDGGEFEE…ILSSDDDDDI (322 aa)) are disordered. 3 positions are modified to phosphoserine: S445, S452, and S453. Over residues 462–476 (CPGKESEEGCPKRGF) the composition is skewed to basic and acidic residues. Phosphoserine is present on residues S481, S485, S494, S498, S521, and S529. Residues 508–538 (LRNDCEENGFAKESEDDPNKESEEEVGPTKE) show a composition bias toward basic and acidic residues. The segment covering 539–552 (SEEDDSEKESDEDC) has biased composition (acidic residues). Residues 553-563 (SEKQSEDGSER) are compositionally biased toward basic and acidic residues. Residues S557, S561, and S579 each carry the phosphoserine modification. A compositionally biased stretch (acidic residues) spans 564-579 (EFEENGLEKDLDEEGS). Over residues 580–590 (EKELHENVLDK) the composition is skewed to basic and acidic residues. The segment covering 591-606 (ELEENDSENSEFEDDG) has biased composition (acidic residues). 5 positions are modified to phosphoserine: S597, S600, S607, S616, and S624. Acidic residues-rich tracts occupy residues 613–633 (EEGSEREFDEDSDEKEEEEDT) and 640–651 (DESNEKEDEEYA). T633 bears the Phosphothreonine mark. S642 is modified (phosphoserine). Basic and acidic residues predominate over residues 652-674 (DEKGLEAADKKEEEGDADEKLFE). Positions 675–713 (ESDDKEDEDADGKEVEDADEKLFEDDDSNEKLFDEEEDS) are enriched in acidic residues. A phosphoserine mark is found at S676, S702, S713, S721, and S748. Over residues 714-725 (NEKLFDDSDERG) the composition is skewed to basic and acidic residues.

It belongs to the HTATSF1 family. Component of the 17S U2 SnRNP complex, a ribonucleoprotein complex that contains small nuclear RNA (snRNA) U2 and a number of specific proteins. Within the 17S U2 SnRNP complex, interacts (via UHM region) directly with SF3B1. Component of a complex which is at least composed of HTATSF1/Tat-SF1, the P-TEFb complex components CDK9 and CCNT1, RNA polymerase II, SUPT5H, and NCL/nucleolin. Interacts with GTF2F2/RAP30 and POLR2A. Interacts with TCERG1/CA150. Interacts with (poly-ADP-ribosylated) RPA1; promoting HTATSF1 recruitment to DNA damage sites. Interacts (when phosphorylated) with TOPBP1; promoting recruitment of TOPBP1 to DNA damage sites during S-phase. Post-translationally, phosphorylation at Ser-748 by CK2 during S-phase in response to DNA damage promotes interaction with TOPBP1 and double-strand break (DSB) repair via homologous recombination.

The protein resides in the nucleus. It localises to the chromosome. Functionally, component of the 17S U2 SnRNP complex of the spliceosome, a large ribonucleoprotein complex that removes introns from transcribed pre-mRNAs. The 17S U2 SnRNP complex (1) directly participates in early spliceosome assembly and (2) mediates recognition of the intron branch site during pre-mRNA splicing by promoting the selection of the pre-mRNA branch-site adenosine, the nucleophile for the first step of splicing. Within the 17S U2 SnRNP complex, HTATSF1 is required to stabilize the branchpoint-interacting stem loop. HTATSF1 is displaced from the 17S U2 SnRNP complex before the stable addition of the 17S U2 SnRNP complex to the spliceosome, destabilizing the branchpoint-interacting stem loop and allowing to probe intron branch site sequences. Also acts as a regulator of transcriptional elongation, possibly by mediating the reciprocal stimulatory effect of splicing on transcriptional elongation. Involved in double-strand break (DSB) repair via homologous recombination in S-phase by promoting the recruitment of TOPBP1 to DNA damage sites. Mechanistically, HTATSF1 is (1) recruited to DNA damage sites in S-phase via interaction with poly-ADP-ribosylated RPA1 and (2) phosphorylated by CK2, promoting recruitment of TOPBP1, thereby facilitating RAD51 nucleofilaments formation and RPA displacement, followed by homologous recombination. This is 17S U2 SnRNP complex component HTATSF1 (HTATSF1) from Pongo abelii (Sumatran orangutan).